The primary structure comprises 414 residues: Ena/VASP-like protein (414 aa).

In terms of domain architecture, WH1 spans 1–112 (MSEQSICQAR…NAMLFALNIM (112 aa)). Position 130 is a phosphoserine (Ser-130). Residues 157–369 (ATGPILPPGH…SRVKPAGSVN (213 aa)) are disordered. Over residues 179–204 (GPPPPPPPPVPPPPTGSTPPPPPPLP) the composition is skewed to pro residues. Residues 217-228 (SASGLAAALAGA) show a composition bias toward low complexity. The segment at 220–240 (GLAAALAGAKLRRVQRPEDAS) is EVH2 block A. The EVH2 stretch occupies residues 220-411 (GLAAALAGAK…DAIRQELSGI (192 aa)). The short motif at 229–232 (KLRR) is the KLKR element. Over residues 240-251 (SGGSSPSGTSKS) the composition is skewed to low complexity. Ser-244 and Ser-257 each carry phosphoserine. The tract at residues 263–280 (GGLMEEMNKLLAKRRKAA) is EVH2 block B. Polar residues predominate over residues 297–318 (EDPSTSPSPGTRATSQPPNSSE). 8 positions are modified to phosphoserine: Ser-302, Ser-304, Ser-327, Ser-329, Ser-339, Ser-347, Ser-352, and Ser-367. Positions 319 to 329 (AGRKPWERSNS) are enriched in basic and acidic residues. The tract at residues 340-360 (RTPSVAKSPEAKSPLQSQPHS) is required for interaction with ZDHHC17. The segment at 377-411 (DLDRMKQEILEEVVRELHKVKEEIIDAIRQELSGI) is EVH2 block C.

The protein belongs to the Ena/VASP family. Homotetramer. Binds to the SH3 domains of ABL1, LYN and SRC. Also binds to profilin, with preference for isoform IIa of PFN2, and the WW domain of APBB1/FE65. Binds to SEMA6A. Interacts, via the Pro-rich region, with the C-terminal SH3 domain of DNMBP. Interacts with RAPH1. Binds, via the EVH1 domain, the Pro-rich domain of Listeria monocytogenes actA. Binds, via the EVH1 domain, the Pro-rich domain of ZYX. Interacts with FYB1. Interacts with ZDHHC17. Post-translationally, phosphorylated by PKA; phosphorylation abolishes binding to SH3 domains of ABL and SRC. Highest expression in thymus and spleen (at protein level). Low levels in placenta, ovary, testis, fat and lung (at protein level). Isoform 1 and isoform 2 are expressed in cortical neurons and glial cells.

It localises to the cytoplasm. The protein localises to the cytoskeleton. It is found in the stress fiber. Its subcellular location is the cell projection. The protein resides in the lamellipodium. In terms of biological role, ena/VASP proteins are actin-associated proteins involved in a range of processes dependent on cytoskeleton remodeling and cell polarity such as axon guidance and lamellipodial and filopodial dynamics in migrating cells. EVL enhances actin nucleation and polymerization. This is Ena/VASP-like protein (Evl) from Mus musculus (Mouse).